Here is a 100-residue protein sequence, read N- to C-terminus: RNA-binding protein YlxQ (100 aa).

The protein belongs to the eukaryotic ribosomal protein eL8 family.

Its function is as follows. RNA-binding protein that recognizes the K-turn motif present in ribosomal RNA, but also in box C/D and box C'/D' sRNAs. This chain is RNA-binding protein YlxQ, found in Bacillus subtilis (strain 168).